Reading from the N-terminus, the 158-residue chain is 2-C-methyl-D-erythritol 2,4-cyclodiphosphate synthase (158 aa).

Asp8 and His10 together coordinate a divalent metal cation. 4-CDP-2-C-methyl-D-erythritol 2-phosphate contacts are provided by residues 8-10 and 34-35; these read DVH and HS. His42 contributes to the a divalent metal cation binding site. 4-CDP-2-C-methyl-D-erythritol 2-phosphate contacts are provided by residues 56-58, 61-65, 100-106, 132-135, Phe139, and Arg142; these read DIG, FPDTD, AQVPKMA, and TTTE.

Belongs to the IspF family. Homotrimer. The cofactor is a divalent metal cation.

It catalyses the reaction 4-CDP-2-C-methyl-D-erythritol 2-phosphate = 2-C-methyl-D-erythritol 2,4-cyclic diphosphate + CMP. The protein operates within isoprenoid biosynthesis; isopentenyl diphosphate biosynthesis via DXP pathway; isopentenyl diphosphate from 1-deoxy-D-xylulose 5-phosphate: step 4/6. Its function is as follows. Involved in the biosynthesis of isopentenyl diphosphate (IPP) and dimethylallyl diphosphate (DMAPP), two major building blocks of isoprenoid compounds. Catalyzes the conversion of 4-diphosphocytidyl-2-C-methyl-D-erythritol 2-phosphate (CDP-ME2P) to 2-C-methyl-D-erythritol 2,4-cyclodiphosphate (ME-CPP) with a corresponding release of cytidine 5-monophosphate (CMP). In Sodalis glossinidius (strain morsitans), this protein is 2-C-methyl-D-erythritol 2,4-cyclodiphosphate synthase.